The chain runs to 229 residues: Vacuolar protein-sorting-associated protein 60 (229 aa).

Residues asparagine 9–alanine 155 are a coiled coil. Residue serine 12 is modified to Phosphoserine. Residues isoleucine 128–asparagine 159 form an interaction with VTA1 region. Residues proline 186–glutamine 229 form a disordered region. Basic and acidic residues predominate over residues threonine 218–glutamine 229.

The protein belongs to the SNF7 family. In terms of assembly, interacts with VTA1; the interaction occurs at he endosomal membrane.

The protein localises to the endosome membrane. Its subcellular location is the vacuole membrane. Functionally, has a role in a late stage of multivesicular body (MVB) formation. Can stimulate VPS4 ATPase activity via VTA1. The sequence is that of Vacuolar protein-sorting-associated protein 60 (VPS60) from Saccharomyces cerevisiae (strain ATCC 204508 / S288c) (Baker's yeast).